The primary structure comprises 263 residues: Lens fiber major intrinsic protein (263 aa).

Topologically, residues 1–9 are cytoplasmic; that stretch reads MWEFRSFSF. Residues 10–29 form a helical membrane-spanning segment; sequence WRAVFAEFFGTMFYVFFGLG. The Extracellular segment spans residues 30–41; sequence ASLKWAAGPANV. The chain crosses the membrane as a helical span at residues 42 to 59; that stretch reads LVIALAFGLVLATMVQSI. Residues 60–61 are Cytoplasmic-facing; it reads GH. Residues 62–77 constitute an intramembrane region (discontinuously helical); that stretch reads VSGAHINPAVTFAFLI. An NPA 1 motif is present at residues 68-70; that stretch reads NPA. Residues 78 to 82 lie on the Cytoplasmic side of the membrane; it reads GSQMS. A helical transmembrane segment spans residues 83–106; the sequence is LFRAIFYIAAQLLGAVAGAAVLYG. Topologically, residues 107–127 are extracellular; sequence VTPAAIRGNLALNTLHPGVSL. A helical membrane pass occupies residues 128-148; the sequence is GQATTVEIFLTLQFVLCIFAT. The Cytoplasmic segment spans residues 149-156; sequence YDERRNGR. Residues 157–175 form a helical membrane-spanning segment; that stretch reads LGSVSLAIGFSLTLGHLFG. Residues 176–178 are Extracellular-facing; sequence LYY. Positions 179–193 form an intramembrane region, discontinuously helical; that stretch reads TGASMNPARSFAPAV. The NPA 2 motif lies at 184–186; the sequence is NPA. At 194–200 the chain is on the extracellular side; the sequence is LTRNFTN. Residues 201–222 traverse the membrane as a helical segment; the sequence is HWVYWVGPIIGGALGGLVYDFI. The Cytoplasmic portion of the chain corresponds to 223–263; sequence LFPRMRGLSERLSILKGARPAEPEGQQEATGEPIELKTQSL. The tract at residues 227–237 is interaction with CALM; it reads MRGLSERLSIL. A disordered region spans residues 241-263; the sequence is RPAEPEGQQEATGEPIELKTQSL.

Belongs to the MIP/aquaporin (TC 1.A.8) family. In terms of assembly, homotetramer; each monomer provides an independent water pore. Two homotetramers on opposing membranes can dimerize, forming a cell-cell junction. Interacts with CALM; the calcium-calmodulin/CALM complex interacts with the cytoplasmic domains of two aquaporins, leading to channel closure.

The protein resides in the cell membrane. Its subcellular location is the cell junction. It carries out the reaction H2O(in) = H2O(out). The water channel activity is inhibited by calcium through calmodulin/CALM. In terms of biological role, aquaporins form homotetrameric transmembrane channels, with each monomer independently mediating water transport across the plasma membrane along its osmotic gradient. Specifically expressed in lens fiber cells, this aquaporin is crucial for maintaining lens water homeostasis and transparency. Beyond water permeability, it also acts as a cell-to-cell adhesion molecule, forming thin junctions between lens fiber cells that are essential for maintaining the ordered structure and transparency of the lens. The protein is Lens fiber major intrinsic protein of Lithobates pipiens (Northern leopard frog).